Here is a 187-residue protein sequence, read N- to C-terminus: 3'-5' DNA exonuclease Cap18 (187 aa).

Residues 9 to 173 (VSVDVETSGP…HDARYQAELF (165 aa)) enclose the Exonuclease domain. Positions 12, 25, 160, and 165 each coordinate Mg(2+). The active-site Proton donor/acceptor is the H160.

It belongs to the Cap18 exonuclease family. In terms of assembly, homodimer.

Its function is as follows. Effector component of a CBASS antivirus system. CBASS (cyclic oligonucleotide-based antiphage signaling system) provides immunity against bacteriophage. The CD-NTase protein synthesizes cyclic nucleotides in response to infection; these serve as specific second messenger signals. The signals activate a diverse range of effectors, leading to bacterial cell death and thus abortive phage infection. A type III CBASS system. A sequence non-specific 3'-5' DNA exonuclease that preferentially degrades ssDNA with 3' overhangs or a mismatch at the 3' end. Expression of this CBASS system (Cap17-CapW-CdnC-Cap7-Cap6-Cap18-Cap19) in a susceptible E.coli (strain JP313) confers resistance to bacteriophage lambda cI--. The polypeptide is 3'-5' DNA exonuclease Cap18 (Escherichia coli).